A 3718-amino-acid polypeptide reads, in one-letter code: Laminin subunit alpha-5 (3718 aa).

A signal peptide spans 1-40 (MAKRGGQLCAGSAPGALGPRSPAPRPLLLLLAGLALVGEA). One can recognise a Laminin N-terminal domain in the interval 46–304 (DGFSLHPPYF…SIKDISIGGR (259 aa)). N100, N148, and N248 each carry an N-linked (GlcNAc...) asparagine glycan. 12 disulfides stabilise this stretch: C305–C314, C307–C327, C329–C338, C341–C361, C364–C373, C366–C398, C401–C410, C413–C431, C434–C445, C436–C452, C454–C463, and C466–C476. 3 Laminin EGF-like domains span residues 305 to 363 (CVCH…ECQS), 364 to 433 (CNCH…VCRP), and 434 to 479 (CDCE…CYPL). N-linked (GlcNAc...) asparagine glycosylation is present at N383. N-linked (GlcNAc...) asparagine glycosylation is present at N457. The N-linked (GlcNAc...) asparagine glycan is linked to N485. 29 disulfide bridges follow: C500–C512, C502–C521, C523–C532, C535–C544, C547–C559, C549–C566, C568–C577, C580–C590, C593–C605, C595–C611, C613–C622, C625–C635, C638–C650, C640–C656, C658–C667, C670–C680, C683–C695, C685–C702, C704–C713, C716–C731, C752–C761, C764–C779, C782–C796, C784–C802, C804–C813, C816–C831, C834–C846, C836–C853, and C855–C864. 7 Laminin EGF-like domains span residues 500–546 (CDCN…SCHP), 547–592 (CQCS…LCQL), 593–637 (CGCS…DCHA), 638–682 (CACD…SCIP), 683–728 (CHCS…YCEA), 729–781 (GSCH…GCTR), and 782–833 (CSCD…GCRS). The Laminin EGF-like 11; truncated domain occupies 834 to 855 (CRCDVGGALGQGCEPKTGACRC). Residues 856-1442 (RPNTQGPTCS…SLFYNNGALP (587 aa)) form a domain IV 1 (domain IV B) region. N905, N926, and N964 each carry an N-linked (GlcNAc...) asparagine glycan. The segment at 1253-1284 (LTQSQELSPGAPPEGPQPRPPTAVDPNAEPTL) is disordered. A compositionally biased stretch (pro residues) spans 1262-1275 (GAPPEGPQPRPPTA). N1335 carries N-linked (GlcNAc...) asparagine glycosylation. Intrachain disulfides connect C1443-C1455, C1445-C1462, C1464-C1473, C1476-C1486, C1489-C1496, C1491-C1503, C1505-C1514, C1517-C1530, C1533-C1548, C1535-C1555, C1557-C1566, C1569-C1579, C1582-C1594, C1584-C1601, C1603-C1612, and C1615-C1630. Laminin EGF-like domains lie at 1443 to 1488 (CGCH…NCRP), 1489 to 1532 (CDCG…GCEE), 1533 to 1581 (CNCS…SCRP), and 1582 to 1632 (CDCH…GCTR). N-linked (GlcNAc...) asparagine glycosylation occurs at N1534. Residues 1633–1642 (CFCFGATERC) enclose the Laminin EGF-like 16; first part domain. Residues 1646 to 1831 (NLARHEFVDM…RGPPASNVEL (186 aa)) form the Laminin IV type A domain. 2 short sequence motifs (cell attachment site) span residues 1723 to 1725 (RGD) and 1839 to 1841 (RGD). Residues 1832–1864 (CMCPANYRGDSCQECAPGYYRDTKGLFLGRCVP) form the Laminin EGF-like 16; second part domain. 24 cysteine pairs are disulfide-bonded: C1865–C1874, C1867–C1881, C1884–C1893, C1896–C1912, C1915–C1930, C1917–C1939, C1941–C1950, C1953–C1968, C1971–C1986, C1973–C1993, C1996–C2005, C2008–C2022, C2025–C2035, C2027–C2042, C2044–C2053, C2056–C2069, C2072–C2083, C2074–C2090, C2092–C2101, C2104–C2116, C2119–C2126, C2121–C2133, C2135–C2144, and C2147–C2166. Laminin EGF-like domains are found at residues 1865 to 1914 (CQCH…PCVS), 1915 to 1970 (CPCP…SCQP), 1971 to 2024 (CDCS…NCTR), 2025 to 2071 (CDCS…GCRP), 2072 to 2118 (CACG…GCRR), and 2119 to 2168 (CQCP…HCEV). N2021 carries an N-linked (GlcNAc...) asparagine glycan. Residues 2169 to 2735 (CDHCVVLLLD…AQARSAASKV (567 aa)) are domain II and I. N-linked (GlcNAc...) asparagine glycosylation is found at N2198, N2211, N2365, N2395, N2425, N2503, and N2570. Coiled-coil stretches lie at residues 2205-2257 (ARLH…SQAT) and 2330-2464 (TRDL…ASLD). Coiled-coil stretches lie at residues 2604 to 2621 (ARKNQLAAQIQEAQAMLA) and 2639 to 2705 (AEAL…LENR). N2709 is a glycosylation site (N-linked (GlcNAc...) asparagine). Laminin G-like domains follow at residues 2736 to 2933 (KVSM…DKPC), 2947 to 3119 (GSYL…SFGC), 3128 to 3296 (TMTF…SVGC), 3337 to 3511 (AYQF…VTPC), and 3518 to 3689 (DGLF…MRGC). 2 disulfides stabilise this stretch: C2903-C2933 and C3094-C3119. N-linked (GlcNAc...) asparagine glycans are attached at residues N3111, N3213, N3261, and N3291. 2 disulfide bridges follow: C3265–C3296 and C3488–C3511. 2 N-linked (GlcNAc...) asparagine glycosylation sites follow: N3623 and N3673. A disulfide bridge connects residues C3661 and C3689.

As to quaternary structure, laminin is a complex glycoprotein, consisting of three different polypeptide chains (alpha, beta, gamma), which are bound to each other by disulfide bonds into a cross-shaped molecule comprising one long and three short arms with globules at each end. Alpha-5 is a subunit of laminin-10 (laminin-511), laminin-11 (laminin-521) and laminin-15 (laminin-523). In adult, high levels in heart, lung, and kidney; lower in brain, muscle and testis; very low in liver, gut and skin.

It is found in the secreted. Its subcellular location is the extracellular space. The protein localises to the extracellular matrix. It localises to the basement membrane. Its function is as follows. Binding to cells via a high affinity receptor, laminin is thought to mediate the attachment, migration and organization of cells into tissues during embryonic development by interacting with other extracellular matrix components. Alpha-5 may be the major laminin alpha chain of adult epithelial and/or endothelial basal laminae. Plays a role in the regulation of skeletogenesis, through a mechanism that involves integrin-mediated signaling and PTK2B/PYK2. The chain is Laminin subunit alpha-5 (Lama5) from Mus musculus (Mouse).